The following is a 475-amino-acid chain: MIDLDFRKLTIEECLKLSEEEREKLPQLSLETIKRLDPHVKAFISVRENVSVEKKGKFWGIPVAIKDNILTLGMRTTCASRILENYESVFDATVVKKMKEAGFVVVGKANLDEFAMGSSTERSAFFPTRNPWDLERVPGGSSGGSAAAVSAGMVVAALGSDTGGSVRQPASLCGVVGYKPTYGLVSRYGLVAFASSLDQIGPITKTVRDAAILMEIISGRDENDATTVNRKVDFLSEIEEGVSGMKFAVPEEIYEHDIEEGVSERFEEALKLLERLGAKVERVKIPHIKYSVATYYVIAPAEASSNLARFDGVKYGLRIKEKGLREMYMKTRNVGFGEEVRRRIMIGTFTLSAAYYEAYFNKAMKVRRKISDELNEVLSQYDAILTPTSPVTAFKIGEIKDPLTYYLMDIFTIPANLAGLPAISVPFGFSNNLPVGVQVIGRRFADGKVFRIARAIEKNSPYNENGMFPLPEVKA.

Residues lysine 66 and serine 141 each act as charge relay system in the active site. Catalysis depends on serine 165, which acts as the Acyl-ester intermediate.

Belongs to the amidase family. GatA subfamily. In terms of assembly, heterotrimer of A, B and C subunits.

The enzyme catalyses L-glutamyl-tRNA(Gln) + L-glutamine + ATP + H2O = L-glutaminyl-tRNA(Gln) + L-glutamate + ADP + phosphate + H(+). Allows the formation of correctly charged Gln-tRNA(Gln) through the transamidation of misacylated Glu-tRNA(Gln) in organisms which lack glutaminyl-tRNA synthetase. The reaction takes place in the presence of glutamine and ATP through an activated gamma-phospho-Glu-tRNA(Gln). The protein is Glutamyl-tRNA(Gln) amidotransferase subunit A (gatA) of Thermotoga maritima (strain ATCC 43589 / DSM 3109 / JCM 10099 / NBRC 100826 / MSB8).